Here is a 571-residue protein sequence, read N- to C-terminus: Glutamate--tRNA ligase (571 aa).

Positions 106-116 (PNPDGAFHLGN) match the 'HIGH' region motif.

The protein belongs to the class-I aminoacyl-tRNA synthetase family. Glutamate--tRNA ligase type 2 subfamily.

The protein localises to the cytoplasm. The catalysed reaction is tRNA(Glu) + L-glutamate + ATP = L-glutamyl-tRNA(Glu) + AMP + diphosphate. In terms of biological role, catalyzes the attachment of glutamate to tRNA(Glu) in a two-step reaction: glutamate is first activated by ATP to form Glu-AMP and then transferred to the acceptor end of tRNA(Glu). This Pyrococcus abyssi (strain GE5 / Orsay) protein is Glutamate--tRNA ligase.